Reading from the N-terminus, the 358-residue chain is Alanine racemase (358 aa).

K35 (proton acceptor; specific for D-alanine) is an active-site residue. K35 bears the N6-(pyridoxal phosphate)lysine mark. R130 serves as a coordination point for substrate. Residue Y255 is the Proton acceptor; specific for L-alanine of the active site. A substrate-binding site is contributed by M303.

Belongs to the alanine racemase family. The cofactor is pyridoxal 5'-phosphate.

The enzyme catalyses L-alanine = D-alanine. The protein operates within amino-acid biosynthesis; D-alanine biosynthesis; D-alanine from L-alanine: step 1/1. Catalyzes the interconversion of L-alanine and D-alanine. May also act on other amino acids. The chain is Alanine racemase (alr) from Shewanella sp. (strain MR-7).